A 722-amino-acid chain; its full sequence is Threonine--tRNA ligase 1, cytoplasmic (722 aa).

Polar residues predominate over residues 1–10; sequence MSQEKASSPS. A disordered region spans residues 1-48; that stretch reads MSQEKASSPSGKMDGEKPVDASEEKRKEGGKKKSKDGGGDGGRAELNP. Residues 13-27 are compositionally biased toward basic and acidic residues; the sequence is MDGEKPVDASEEKRK. A TGS domain is found at 78–142; the sequence is DSKPIKVTLP…ETDCTLELLK (65 aa). Lysine 242 is subject to N6-acetyllysine. The residue at position 245 (threonine 245) is a Phosphothreonine. Tyrosine 297 is subject to Phosphotyrosine. Threonine 452 is modified (phosphothreonine).

This sequence belongs to the class-II aminoacyl-tRNA synthetase family. In terms of assembly, homodimer. ISGylated.

It localises to the cytoplasm. The catalysed reaction is tRNA(Thr) + L-threonine + ATP = L-threonyl-tRNA(Thr) + AMP + diphosphate + H(+). Functionally, catalyzes the attachment of threonine to tRNA(Thr) in a two-step reaction: threonine is first activated by ATP to form Thr-AMP and then transferred to the acceptor end of tRNA(Thr). Also edits incorrectly charged tRNA(Thr) via its editing domain, at the post-transfer stage. The chain is Threonine--tRNA ligase 1, cytoplasmic (Tars1) from Mus musculus (Mouse).